Here is a 417-residue protein sequence, read N- to C-terminus: MLEQMGIAAKQASYKLAQLSSREKNRVLEKIADELEAQSEIILNANAQDVADARANGLGEAMLDRLALTPARLKGIADDVRQVCNLADPVGQVIDGSVLDSGLRLERRRVPLGVIGVIYEARPNVTVDVASLCLKTGNAVILRGGKETCRTNAATVAVIQDALKSCGLPAGAVQAIDNPDRALVSEMLRMDKYIDMLIPRGGAGLHKLCREQSTIPVITGGIGVCHIYVDESVEIAEALKVIVNAKTQRPSTCNTVETLLVNKNIADSFLPALSKQMAESGVTLHADAAALAQLQTGPAKVVAVKAEEYDDEFLSLDLNVKIVSDLDDAIAHIREHGTEHSDAILTRDMRNAQRFVNEVDSSAVYVNASTRFTDGGQFGLGAEVAVSTQKLHARGPMGLEALTTYKWIGIGDYTIRA.

The protein belongs to the gamma-glutamyl phosphate reductase family.

It is found in the cytoplasm. It catalyses the reaction L-glutamate 5-semialdehyde + phosphate + NADP(+) = L-glutamyl 5-phosphate + NADPH + H(+). The protein operates within amino-acid biosynthesis; L-proline biosynthesis; L-glutamate 5-semialdehyde from L-glutamate: step 2/2. Functionally, catalyzes the NADPH-dependent reduction of L-glutamate 5-phosphate into L-glutamate 5-semialdehyde and phosphate. The product spontaneously undergoes cyclization to form 1-pyrroline-5-carboxylate. In Escherichia coli (strain 55989 / EAEC), this protein is Gamma-glutamyl phosphate reductase.